A 1512-amino-acid chain; its full sequence is Lysophospholipase NTE1 (1512 aa).

The Cytoplasmic segment spans residues 1 to 48; that stretch reads MAAPDAMTSLVKSSVALLSSAHESLPTSLAAMKTAETAPSSTFGILGR. A helical transmembrane segment spans residues 49–69; it reads VILSILSVLPTLLFWVSYTLP. Residues 70 to 83 lie on the Lumenal side of the membrane; the sequence is TWLFTLFSMSLTFT. Residues 84–104 traverse the membrane as a helical segment; sequence MNFTTLMLVLVFVVSTISYFV. Residues 105 to 1512 are Cytoplasmic-facing; it reads RYRYLTMYAR…RTMAPRRASI (1408 aa). Disordered stretches follow at residues 204-230, 262-362, 534-556, and 740-770; these read NREE…QAHR, RHDE…AHPD, TQMS…QHDV, and TEDD…KRSR. A compositionally biased stretch (acidic residues) spans 208-217; it reads SDSDEDDGEL. The segment covering 268-291 has biased composition (polar residues); sequence GPSSSTPMSPQHRPSMTRNSSFNM. Residues 343–358 are compositionally biased toward basic residues; sequence HSKQRRSPSRSTKPKS. Residues 537-549 are compositionally biased toward low complexity; sequence SRGTGRSGRSSFS. Residues 669–793 and 830–950 each bind a nucleoside 3',5'-cyclic phosphate; these read LSAS…SNRS and RLTT…IASR. The span at 751–761 shows a compositional bias: polar residues; that stretch reads PTATNTSLRNG. One can recognise a PNPLA domain in the interval 1209 to 1373; the sequence is LVLGGGGARG…IDNLTVAHMK (165 aa). A GXGXXG motif is present at residues 1213-1218; it reads GGGARG. A GXSXG motif is present at residues 1240–1244; the sequence is GTSIG. The Nucleophile role is filled by Ser1242. The active-site Proton acceptor is Asp1360. Positions 1360–1362 match the DGA/G motif; sequence DGG.

The protein belongs to the NTE family.

It is found in the endoplasmic reticulum membrane. The enzyme catalyses a 1-acyl-sn-glycero-3-phosphocholine + H2O = sn-glycerol 3-phosphocholine + a fatty acid + H(+). Inhibited by organophosphorus esters. Its function is as follows. Intracellular phospholipase B that catalyzes the double deacylation of phosphatidylcholine (PC) to glycerophosphocholine (GroPCho). Plays an important role in membrane lipid homeostasis. Responsible for the rapid PC turnover in response to inositol, elevated temperatures, or when choline is present in the growth medium. In Phaeosphaeria nodorum (strain SN15 / ATCC MYA-4574 / FGSC 10173) (Glume blotch fungus), this protein is Lysophospholipase NTE1 (NTE1).